A 265-amino-acid polypeptide reads, in one-letter code: MSYKAQYTPGETQIAENRRKHMDPDYEFRKLREVSDEDLVKVLGHRNPGESYKSVHPPLDEMDFEEDIVRDMVEPIQGAKEGVRVRYIQFADSMYNAPAQPYDRARTYMWRYRGVDTGTLSGRQVIEMRELDLEGVSKELVETELFDPATTGIRGATVHGHSLRLDENGLMFDALQRYVFDEEKGHVVYVKDQVGRPLDEPVDMGQPLGEDELKKITTIYRKDNIAMRDDKEAIEVVENIHTGRTLGGFGMDVFKDDLRKRLGDD.

A coenzyme M-binding site is contributed by Arg-123.

Belongs to the methyl-coenzyme M reductase gamma subunit family. In terms of assembly, MCR is a hexamer of two alpha, two beta, and two gamma chains, forming a dimer of heterotrimers. Coenzyme F430 is required as a cofactor.

The catalysed reaction is coenzyme B + methyl-coenzyme M = methane + coenzyme M-coenzyme B heterodisulfide. It participates in one-carbon metabolism; methyl-coenzyme M reduction; methane from methyl-coenzyme M: step 1/1. In terms of biological role, component of the methyl-coenzyme M reductase (MCR) I that catalyzes the reductive cleavage of methyl-coenzyme M (CoM-S-CH3 or 2-(methylthio)ethanesulfonate) using coenzyme B (CoB or 7-mercaptoheptanoylthreonine phosphate) as reductant which results in the production of methane and the mixed heterodisulfide of CoB and CoM (CoM-S-S-CoB). This is the final step in methanogenesis. The sequence is that of Methyl-coenzyme M reductase II subunit gamma (mrtG) from Methanothermobacter marburgensis (strain ATCC BAA-927 / DSM 2133 / JCM 14651 / NBRC 100331 / OCM 82 / Marburg) (Methanobacterium thermoautotrophicum).